The following is a 174-amino-acid chain: Peroxisome assembly protein 22 (174 aa).

The chain crosses the membrane as a helical span at residues 9 to 27 (GYLAIIAAVSIGAAAYLWW).

The protein belongs to the peroxin-22 family.

It localises to the peroxisome membrane. Involved in peroxisome biogenesis. The sequence is that of Peroxisome assembly protein 22 (PEX22) from Candida glabrata (strain ATCC 2001 / BCRC 20586 / JCM 3761 / NBRC 0622 / NRRL Y-65 / CBS 138) (Yeast).